The sequence spans 617 residues: Proline--tRNA ligase (617 aa).

Belongs to the class-II aminoacyl-tRNA synthetase family. ProS type 1 subfamily. As to quaternary structure, homodimer.

Its subcellular location is the cytoplasm. The catalysed reaction is tRNA(Pro) + L-proline + ATP = L-prolyl-tRNA(Pro) + AMP + diphosphate. In terms of biological role, catalyzes the attachment of proline to tRNA(Pro) in a two-step reaction: proline is first activated by ATP to form Pro-AMP and then transferred to the acceptor end of tRNA(Pro). As ProRS can inadvertently accommodate and process non-cognate amino acids such as alanine and cysteine, to avoid such errors it has two additional distinct editing activities against alanine. One activity is designated as 'pretransfer' editing and involves the tRNA(Pro)-independent hydrolysis of activated Ala-AMP. The other activity is designated 'posttransfer' editing and involves deacylation of mischarged Ala-tRNA(Pro). The misacylated Cys-tRNA(Pro) is not edited by ProRS. The chain is Proline--tRNA ligase from Streptococcus pneumoniae (strain CGSP14).